A 270-amino-acid polypeptide reads, in one-letter code: MAFYRTNLPTRELFSLVSVVIVLLATNINSVQALSFNFTKLTTANSGVTFQGDAQILPSGLIALTKSSPFPPGQYFTTVGRALSSNLVPLWDSATGKAASFVTSFSFVIDTTEGPITDGLIFFIAPPGTVIPQNSTTPFLGVVDSETSINRFVGLEFDLYRNSWDPEGRHIGIDINSIISTKTVTYNLVSGSLTKVIIIYDSPSSTLSAAIIYENGKISTISQVIDLKTVLPNTVQIGLSAATLTGESYSIHSWSFVSDLETTASYVSNI.

The signal sequence occupies residues 1-33 (MAFYRTNLPTRELFSLVSVVIVLLATNINSVQA). Positions 34 to 41 (LSFNFTKL) are excised as a propeptide. Asn134 carries N-linked (GlcNAc...) asparagine glycosylation.

The protein belongs to the leguminous lectin family. Post-translationally, glycosylated in a boron-dependent manner. Glycosylation is required for localization to symbiosomes. 3 different glycosylation variants, NLEC-1A, NLEC-1B and NLEC-1C, have been identified. As to expression, expressed in nodules of Rhizobium-infected and uninfected roots and in the root stele near the nodule attachment point. In roots which have been colonized by the endomycorrhizal fungus G.versiforme, detected only in cortical cells colonized by the fungus, mainly those containing arbuscules.

The protein localises to the symbiosome. Its subcellular location is the peribacteroid space. It localises to the peribacteroid membrane. Functionally, involved in symbiosome development. This chain is Nodule lectin (NLEC1), found in Pisum sativum (Garden pea).